The following is a 211-amino-acid chain: Ras-related protein Rab-38 (211 aa).

10 residues coordinate GTP: Gly-19, Val-20, Gly-21, Lys-22, Thr-23, Ser-24, Ser-35, Ser-36, Tyr-38, and Thr-41. Thr-23 provides a ligand contact to Mg(2+). Residues 32–46 carry the Switch 1 motif; that stretch reads QNFSSHYRATIGVDF. Mg(2+) is bound by residues Thr-41 and Asp-65. Positions 68, 128, 130, 160, and 161 each coordinate GTP. A Switch 2 motif is present at residues 68 to 81; it reads GQERFGNMTRVYYR. Cys-205 is lipidated: S-palmitoyl cysteine. Cys-208 carries the S-geranylgeranyl cysteine lipid modification.

This sequence belongs to the small GTPase superfamily. Rab family. As to quaternary structure, interacts with ANKRD27. The cofactor is Mg(2+). Post-translationally, although at least one in vitro system can process and methylate the prenylated C-terminal, in an in vitro system that normally express Rab-38 and in vivo the prenylated C-terminal is not proteolytically processed and not methylated. Expressed in melanocytes.

It localises to the cell membrane. The protein localises to the melanosome. The protein resides in the cytoplasmic vesicle. Its subcellular location is the phagosome. It is found in the phagosome membrane. It localises to the melanosome membrane. The enzyme catalyses GTP + H2O = GDP + phosphate + H(+). Regulated by guanine nucleotide exchange factors (GEFs) including the BLOC-3 complex composed of HPS1 and HPS4 which promote the exchange of bound GDP for free GTP. Regulated by GTPase activating proteins (GAPs) including SGSM2 which increase the GTP hydrolysis activity. Inhibited by GDP dissociation inhibitors (GDIs). Functionally, the small GTPases Rab are key regulators of intracellular membrane trafficking, from the formation of transport vesicles to their fusion with membranes. Rabs cycle between an inactive GDP-bound form and an active GTP-bound form that is able to recruit to membranes different sets of downstream effectors directly responsible for vesicle formation, movement, tethering and fusion. RAB38 may be involved in melanosomal transport and docking. Involved in the proper sorting of TYRP1. Involved in peripheral melanosomal distribution of TYRP1 in melanocytes; the function, which probably is implicating vesicle-trafficking, includes cooperation with ANKRD27 and VAMP7. Plays a role in the maturation of phagosomes that engulf pathogens, such as S.aureus and M.tuberculosis. Plays an important role in the control of melanin production and melanosome biogenesis. In concert with RAB32, regulates the proper trafficking of melanogenic enzymes TYR, TYRP1 and DCT/TYRP2 to melanosomes in melanocytes. The protein is Ras-related protein Rab-38 of Homo sapiens (Human).